A 755-amino-acid chain; its full sequence is Periplasmic nitrate reductase (755 aa).

A signal peptide (tat-type signal) is located at residues 1 to 32; the sequence is MSTSRRDFLKYFAMSAAVAAASGAGFGSLALA. The 4Fe-4S Mo/W bis-MGD-type domain maps to 38–93; it reads EKWVKGVCRYCGTGCGVLVGVKDGKAVAIQGDPNNHNAGLLCLKGSLLIPVLNSKE. [4Fe-4S] cluster is bound by residues Cys-45, Cys-48, Cys-52, and Cys-79. Residues Lys-81, Gln-143, Asn-168, Cys-172, 208-212, 236-238, 255-257, Met-340, Gln-344, Asn-450, 475-477, and 647-656 contribute to the Mo-bis(molybdopterin guanine dinucleotide) site; these read NTSEA, DPR, GTD, IEA, and SMRVIDHWHT. Residues 648 to 653 and Phe-721 each bind substrate; that span reads MRVIDH. Asn-729 and Lys-746 together coordinate Mo-bis(molybdopterin guanine dinucleotide).

It belongs to the prokaryotic molybdopterin-containing oxidoreductase family. NasA/NapA/NarB subfamily. In terms of assembly, monomer. Component of the periplasmic nitrate reductase NapAB complex composed of NapA and NapB. [4Fe-4S] cluster is required as a cofactor. Mo-bis(molybdopterin guanine dinucleotide) serves as cofactor. Predicted to be exported by the Tat system. The position of the signal peptide cleavage has been experimentally proven.

It localises to the periplasm. The enzyme catalyses 2 Fe(II)-[cytochrome] + nitrate + 2 H(+) = 2 Fe(III)-[cytochrome] + nitrite + H2O. Activated by potassium and sodium ions and inhibited by magnesium and calcium ions. Catalytic subunit of the periplasmic nitrate reductase complex NapAB. Receives electrons from NapB and catalyzes the reduction of nitrate to nitrite. The sequence is that of Periplasmic nitrate reductase from Desulfovibrio desulfuricans (strain ATCC 27774 / DSM 6949 / MB).